Reading from the N-terminus, the 423-residue chain is Diels-Alderase cheD (423 aa).

The N-terminal stretch at 1–18 is a signal peptide; the sequence is MKLCALFAGAVISTSAVA. N-linked (GlcNAc...) asparagine glycans are attached at residues N84 and N132.

This sequence belongs to the Diels-Alderase family.

Its pathway is secondary metabolite biosynthesis. Functionally, diels-Alderase; part of the gene cluster that mediates the biosynthesis of chaetoglobosin A which has a unique inhibitory activity against actin polymerization in mammalian cells. Chaetoglobosin A and its intermediates are involved in the morphological differentiation of C.globosum. The first step of the pathway is the synthesis of prochaetoglobosin I via condensation of one acetyl-CoA, 8 malonyl-CoA, and a L-tryptophan molecule by the PKS-NRPS hybrid synthetase cheA, followed by reduction of backbone double bond to install desired geometry by the enoyl reductase cheB. Further multiple oxidation steps performed by the cytochrome P450 monooxygenases cheE and cheG, as well as by the FAD-linked oxidoreductase cheF, lead to the formation of chaetoglobosin A. Depending on the order of action of these reductases, distinct intermediates can be identified. Within the pathway, the cytochrome P450 monooxygenase cheE catalyzes a stereospecific epoxidation on prochaetoglobosin I, cytoglobosin D, and chaetoglobosin J intermediates. The FAD-linked oxidoreductase cheF performs dehydrogenation of the C-20 hydroxyl groups in the 20-dihyrochaetoglobosin A and cytoglobosin D intermediates. Finally, the cytochrome P450 monooxygenase cheG can catalyze the stereospecific dihydroxylation of prochaetoglobosin I and prochaetoglobosin IV at C-19 and C-20, respectively. The Diels-Alderase cheD may play a role in the post-PKS-NRPS biosynthetic steps catalyzing Diels-Alder cyclization. The chain is Diels-Alderase cheD from Chaetomium globosum (strain ATCC 6205 / CBS 148.51 / DSM 1962 / NBRC 6347 / NRRL 1970) (Soil fungus).